We begin with the raw amino-acid sequence, 322 residues long: MKDNFNRNIDYLRISIIDRCNLRCIYCMPEEGITNLLPHHEILSYEEILKIVEIGVDLGITKIRITGGEPLLRKGIVSFIERLARIEGIRDIGMTTNGVLLKKFAKDLYNAGLKRVNVSLDSLDENKFRAITRVGLIDDVFEGIDEAKNAGLQPVKVNVVVMKGINDDEIEKFALWSKKVEYQIRFIEFMPVGQNAWKKELFISKDEIKERIENKIGKLIPVQMKKSGPAEYFMLAGAKGFLGFISPMTTHICVRCNRLRLTADGKLRPCLFSDKEVDIKKILRSGASTEEIRETIIKTIHLKPQGMSEHTKPLRPMSTIGG.

The region spanning 4–229 (NFNRNIDYLR…IPVQMKKSGP (226 aa)) is the Radical SAM core domain. Residue R13 participates in GTP binding. [4Fe-4S] cluster contacts are provided by C20 and C24. Residue Y26 coordinates S-adenosyl-L-methionine. C27 contributes to the [4Fe-4S] cluster binding site. R64 is a binding site for GTP. S-adenosyl-L-methionine is bound at residue G68. Position 95 (T95) interacts with GTP. Residue S119 coordinates S-adenosyl-L-methionine. K156 serves as a coordination point for GTP. M190 lines the S-adenosyl-L-methionine pocket. The [4Fe-4S] cluster site is built by C253 and C256. 258-260 (RLR) is a GTP binding site. C270 serves as a coordination point for [4Fe-4S] cluster.

It belongs to the radical SAM superfamily. MoaA family. Monomer and homodimer. The cofactor is [4Fe-4S] cluster.

It catalyses the reaction GTP + AH2 + S-adenosyl-L-methionine = (8S)-3',8-cyclo-7,8-dihydroguanosine 5'-triphosphate + 5'-deoxyadenosine + L-methionine + A + H(+). It participates in cofactor biosynthesis; molybdopterin biosynthesis. In terms of biological role, catalyzes the cyclization of GTP to (8S)-3',8-cyclo-7,8-dihydroguanosine 5'-triphosphate. The protein is GTP 3',8-cyclase of Thermodesulfovibrio yellowstonii (strain ATCC 51303 / DSM 11347 / YP87).